Here is a 262-residue protein sequence, read N- to C-terminus: Small ribosomal subunit protein eS4A (262 aa).

Positions 42-105 (LPLIVFLRNR…GEHFRLVYDI (64 aa)) constitute an S4 RNA-binding domain.

The protein belongs to the eukaryotic ribosomal protein eS4 family. Component of the small ribosomal subunit (SSU). Mature yeast ribosomes consist of a small (40S) and a large (60S) subunit. The 40S small subunit contains 1 molecule of ribosomal RNA (18S rRNA) and at least 33 different proteins. The large 60S subunit contains 3 rRNA molecules (25S, 5.8S and 5S rRNA) and at least 46 different proteins.

The protein resides in the cytoplasm. Its function is as follows. Component of the ribosome, a large ribonucleoprotein complex responsible for the synthesis of proteins in the cell. The small ribosomal subunit (SSU) binds messenger RNAs (mRNAs) and translates the encoded message by selecting cognate aminoacyl-transfer RNA (tRNA) molecules. The large subunit (LSU) contains the ribosomal catalytic site termed the peptidyl transferase center (PTC), which catalyzes the formation of peptide bonds, thereby polymerizing the amino acids delivered by tRNAs into a polypeptide chain. The nascent polypeptides leave the ribosome through a tunnel in the LSU and interact with protein factors that function in enzymatic processing, targeting, and the membrane insertion of nascent chains at the exit of the ribosomal tunnel. The chain is Small ribosomal subunit protein eS4A (rps401) from Schizosaccharomyces pombe (strain 972 / ATCC 24843) (Fission yeast).